Consider the following 87-residue polypeptide: Small ribosomal subunit protein bS20 (87 aa).

This sequence belongs to the bacterial ribosomal protein bS20 family.

Functionally, binds directly to 16S ribosomal RNA. The chain is Small ribosomal subunit protein bS20 from Finegoldia magna (strain ATCC 29328 / DSM 20472 / WAL 2508) (Peptostreptococcus magnus).